A 543-amino-acid polypeptide reads, in one-letter code: Dipeptide-binding protein DppE (543 aa).

Positions 1-22 (MKRVKKLWGMGLALGLSFALMG) are cleaved as a signal peptide. The N-palmitoyl cysteine moiety is linked to residue C23. C23 carries the S-diacylglycerol cysteine lipid modification.

The protein belongs to the bacterial solute-binding protein 5 family.

Its subcellular location is the cell membrane. In terms of biological role, probably part of the ABC transporter DppBCDE involved in dipeptide transport. In Bacillus subtilis (strain 168), this protein is Dipeptide-binding protein DppE (dppE).